We begin with the raw amino-acid sequence, 62 residues long: Conotoxin Im5.1 (62 aa).

An N-terminal signal peptide occupies residues 1–19 (MYCLPVFIILLLLISSAPS). The propeptide occupies 20-48 (TPPQPRNKDRVHLISLLDNHKQILQRDWN). Residue W60 is modified to Tryptophan amide.

The protein belongs to the conotoxin T superfamily. In terms of processing, contains 2 disulfide bonds that can be either 'C1-C3, C2-C4' or 'C1-C4, C2-C3', since these disulfide connectivities have been observed for conotoxins with cysteine framework V (for examples, see AC P0DQQ7 and AC P81755). As to expression, expressed by the venom duct.

The protein resides in the secreted. The polypeptide is Conotoxin Im5.1 (Conus imperialis (Imperial cone)).